We begin with the raw amino-acid sequence, 230 residues long: Ribonuclease 3 (230 aa).

The RNase III domain occupies 19 to 134 (ELLTIALTHR…LLGAIYLEHG (116 aa)). Residue Glu44 coordinates Mg(2+). Residue Asp48 is part of the active site. Mg(2+)-binding residues include Asp120 and Glu123. The region spanning 161-229 (DWKSSLQELT…AASAYKTLDE (69 aa)) is the DRBM domain.

Belongs to the ribonuclease III family. Homodimer. The cofactor is Mg(2+).

Its subcellular location is the cytoplasm. The enzyme catalyses Endonucleolytic cleavage to 5'-phosphomonoester.. Digests double-stranded RNA. Involved in the processing of primary rRNA transcript to yield the immediate precursors to the all rRNAs (23S, 16S and 5S). Processes some mRNAs, and tRNAs when they are encoded in the rRNA operon. Processes pre-crRNA and tracrRNA of type II CRISPR loci if present in the organism. The chain is Ribonuclease 3 (rnc) from Mycolicibacterium smegmatis (strain ATCC 700084 / mc(2)155) (Mycobacterium smegmatis).